The primary structure comprises 542 residues: MAAKEVKFQADARERMLRGVDVLANAVKVTLGPKGRNVVIDKSFGAPRITKDGVSVAKEIELEDKFENMGAQMLREVASKTNDLAGDGTTTATVLAQAIVREGAKAIASGMNPMDLKRGIDLAVDAVVKELKSNARKISQNSEIAQVGTISANGDTEIGRYLAEAMEKVGNEGVITVEEAKTSDTELEVVEGMQFDRGYLSPYFVTNQDKMRVELEDPYILIHEKKLSNLQSILPVLEAVVQSGKPLLIIAEDVEGEALATLVVNKLRGGLKVAAVKAPGFGDRRKAMLEDIAILTGGTVVSEDLGIMLENVTLEMLGRAKKVSIEKENTTIIDGAGSKTEIEGRTAQIRAQIEETTSDYDREKLQERLAKLAGGVAVIRVGGSTEVEVKEKKDRVDDALHATRAAVEEGILPGGGIALLRAVNALDGLKTANDDQRVGIEIVRRAIEAPVRQIAENAGAEGSIIVGKLREKVEFSYGWNAQTNEYGDLYTMGVIDPVKVVRTALQDAASVAGLLVTTEAMIAEKPKKESTPALPAGGGMDF.

Residues 30-33 (TLGP), Lys51, 87-91 (DGTTT), Gly415, and Asp496 each bind ATP.

Belongs to the chaperonin (HSP60) family. As to quaternary structure, forms a cylinder of 14 subunits composed of two heptameric rings stacked back-to-back. Interacts with the co-chaperonin GroES.

The protein resides in the cytoplasm. The catalysed reaction is ATP + H2O + a folded polypeptide = ADP + phosphate + an unfolded polypeptide.. Its function is as follows. Together with its co-chaperonin GroES, plays an essential role in assisting protein folding. The GroEL-GroES system forms a nano-cage that allows encapsulation of the non-native substrate proteins and provides a physical environment optimized to promote and accelerate protein folding. This is Chaperonin GroEL 3 from Sinorhizobium medicae (strain WSM419) (Ensifer medicae).